The sequence spans 287 residues: Polyamine aminopropyltransferase (287 aa).

The PABS domain occupies 9–242; the sequence is GSWLDEYQND…GIWSWTFASI (234 aa). Q36 provides a ligand contact to S-methyl-5'-thioadenosine. Spermidine contacts are provided by H67 and D91. S-methyl-5'-thioadenosine contacts are provided by residues E111 and 143-144; that span reads NG. D162 (proton acceptor) is an active-site residue. P169 is a binding site for S-methyl-5'-thioadenosine.

Belongs to the spermidine/spermine synthase family. Homodimer or homotetramer.

It localises to the cytoplasm. The enzyme catalyses S-adenosyl 3-(methylsulfanyl)propylamine + putrescine = S-methyl-5'-thioadenosine + spermidine + H(+). It participates in amine and polyamine biosynthesis; spermidine biosynthesis; spermidine from putrescine: step 1/1. In terms of biological role, catalyzes the irreversible transfer of a propylamine group from the amino donor S-adenosylmethioninamine (decarboxy-AdoMet) to putrescine (1,4-diaminobutane) to yield spermidine. The polypeptide is Polyamine aminopropyltransferase (Prochlorococcus marinus (strain SARG / CCMP1375 / SS120)).